The sequence spans 898 residues: Interleukin enhancer-binding factor 3-B (898 aa).

The DZF domain maps to 5–379 (RIFLNDDRHV…ALKRPIEEDG (375 aa)). 5 disordered regions span residues 52–87 (QEKDSGIEQENPEPEETETTEEGKDSEAKTGENPTR), 374–403 (PIEEDGEDKSPSKKKKKIQKKDEKSEPPQA), 468–529 (LPTG…VMEL), 627–651 (PPPQVMRGRGRGGMNRGRGRGRGGF), and 711–799 (GEGY…QGAA). Residues 61 to 71 (ENPEPEETETT) show a composition bias toward acidic residues. Basic and acidic residues-rich tracts occupy residues 72–81 (EEGKDSEAKT) and 374–384 (PIEEDGEDKSP). A Bipartite nuclear localization signal motif is present at residues 372 to 390 (KRPIEEDGEDKSPSKKKKK). The DRBM 1 domain maps to 399–468 (EPPQAMNALM…AVKVLQDMGL (70 aa)). Positions 474–483 (EKEESVDESE) are enriched in acidic residues. Residues 489–513 (QTPSQTADSEQADSSAGDQSESGKQ) are compositionally biased toward polar residues. The DRBM 2 domain occupies 521 to 587 (HGKNPVMELN…ALSALEKLFP (67 aa)). Gly residues predominate over residues 637–651 (RGGMNRGRGRGRGGF). Residues 717-747 (PTPPKPFVKKPPPPQQQQQPPPQHASNPPKP) show a composition bias toward pro residues. Positions 749–782 (YNQGYQGHQGGQQQQQPQQQQQQTYNQNQYSNYG) are enriched in low complexity.

As to quaternary structure, a component of a ybx2/frgy2-containing mRNA-ribonucleoprotein (mRNP) complex. Also a component of the CCAAT box transcription factor (CBTF) complex. Post-translationally, phosphorylated. Phosphorylation affects nuclear translocation. Methylated by protein arginine N-methyltransferase 1 (prmt1b) in the RGG-rich domain. Methylation decreases DNA-binding and thereby decreases transcription of the gata2 gene, but does not regulate dsRNA binding or subcellular localization.

The protein localises to the nucleus. Its subcellular location is the cytoplasm. In terms of biological role, RNA-binding protein that plays an essential role in the biogenesis of circular RNAs (circRNAs) which are produced by back-splicing circularization of pre-mRNAs. Within the nucleus, promotes circRNAs processing by stabilizing the regulatory elements residing in the flanking introns of the circularized exons. Plays thereby a role in the back-splicing of a subset of circRNAs. As a consequence, participates in a wide range of transcriptional and post-transcriptional processes. Binds to poly-U elements and AU-rich elements (AREs) in the 3'-UTR of target mRNAs. Upon viral infection, ILF3 accumulates in the cytoplasm and participates in the innate antiviral response. Mechanistically, ILF3 becomes phosphorylated and activated by the double-stranded RNA-activated protein kinase/PKR which releases ILF3 from cellular mature circRNAs. In turn, unbound ILF3 molecules are able to interact with and thus inhibit viral mRNAs. Has a cytoplasmic role early in development as part of a ribonucleoprotein (mRNP) complex which may regulate mRNA transport and/or translation. Following nuclear localization at the mid-blastula transition, acts as a transcription factor and binds the 5'-CCAAT-3' promoter sequence to regulate transcription of the gata2 gene as a subunit of the CCAAT box transcription factor (CBTF). Its role as an mRNP component negatively regulates its activity as a transcription factor by precluding its nuclear localization. In Xenopus laevis (African clawed frog), this protein is Interleukin enhancer-binding factor 3-B (ilf3-b).